The following is a 713-amino-acid chain: MFPHEEKLIKERLGREPNEVEKAMLEVMWSEHASYKSSRKWLKLLPTENEHVILGPGEDAGVVKFDDNTAIVVGIESHNHPSAVEPYGGAATGVGGIVRDILCMGARPIALLDPIRFGPLGKERNRYLFEYVVKGIADYGNRIGVPTVGGETEFDESLDNYTLVNVACIGLMRPEELVHSYVEESGLLLVLVGNKTGRDGIHGVTFASEELSENAEEEDRSAVQIPDPFTEKLLIEATLEAVHTGKVKALKDLGGGGLTCASSEMAGKKGFGAVIYADRVPQREPNMNPMEIMISESQERMLFAVRKEDLNEITKIFEKYDLEWTVVGETIEEPRYIVYWNDEKIADLPIDLLADVPIIEWEAKSYDIEKDVQTPEISIEEALLEVLSSPNIVSKAWIWQQYDHEVQGRTVLKPGLDATVLKINDEHGLAFVSDGNPSYSHLNPYHGAMSAVAEVVRNLASVGARPLALVDNLNFASPERPEVYWSFIETIKGLADAAKAFGLAYVSGNVSFYNEVGKKPIKPTPVVAGLGKVKLENITTMDFKDKGDLIAVVGTTKKELGGSELYRIFGINKGIAPRVDLEREKQNVEGILKAIELKLVKAVHDVSKGGLAIALIEMAISGNKGFEVDIEKVPAEGGLSPLEVLFSESHGRFLISFEEKNLEKIKAIFDEFAVIGRVAEEMLIFKHENKEVINSDLRQVKALYNSLPSILGE.

H32 is an active-site residue. Y35 serves as a coordination point for ATP. E76 provides a ligand contact to Mg(2+). Substrate is bound by residues 77-80 and R99; that span reads SHNH. Catalysis depends on H78, which acts as the Proton acceptor. A Mg(2+)-binding site is contributed by D100. Q224 contributes to the substrate binding site. D252 is a binding site for Mg(2+). Substrate is bound at residue 296–298; that stretch reads ESQ. D471 and G508 together coordinate ATP. N509 is a binding site for Mg(2+). Position 511 (S511) interacts with substrate.

Belongs to the FGAMS family. As to quaternary structure, monomer. Part of the FGAM synthase complex composed of 1 PurL, 1 PurQ and 2 PurS subunits.

The protein localises to the cytoplasm. The catalysed reaction is N(2)-formyl-N(1)-(5-phospho-beta-D-ribosyl)glycinamide + L-glutamine + ATP + H2O = 2-formamido-N(1)-(5-O-phospho-beta-D-ribosyl)acetamidine + L-glutamate + ADP + phosphate + H(+). The protein operates within purine metabolism; IMP biosynthesis via de novo pathway; 5-amino-1-(5-phospho-D-ribosyl)imidazole from N(2)-formyl-N(1)-(5-phospho-D-ribosyl)glycinamide: step 1/2. Its function is as follows. Part of the phosphoribosylformylglycinamidine synthase complex involved in the purines biosynthetic pathway. Catalyzes the ATP-dependent conversion of formylglycinamide ribonucleotide (FGAR) and glutamine to yield formylglycinamidine ribonucleotide (FGAM) and glutamate. The FGAM synthase complex is composed of three subunits. PurQ produces an ammonia molecule by converting glutamine to glutamate. PurL transfers the ammonia molecule to FGAR to form FGAM in an ATP-dependent manner. PurS interacts with PurQ and PurL and is thought to assist in the transfer of the ammonia molecule from PurQ to PurL. The chain is Phosphoribosylformylglycinamidine synthase subunit PurL from Thermococcus sibiricus (strain DSM 12597 / MM 739).